A 110-amino-acid polypeptide reads, in one-letter code: Cytochrome c6 (110 aa).

An N-terminal signal peptide occupies residues Met1–Ala25. Residues Cys39, Cys42, His43, and Met83 each coordinate heme c.

This sequence belongs to the cytochrome c family. PetJ subfamily. As to quaternary structure, monomer. Post-translationally, binds 1 heme c group covalently per subunit.

The protein resides in the plastid. Its subcellular location is the chloroplast thylakoid lumen. Its function is as follows. Functions as an electron carrier between membrane-bound cytochrome b6-f and photosystem I in oxygenic photosynthesis. The sequence is that of Cytochrome c6 (petJ) from Porphyra purpurea (Red seaweed).